The primary structure comprises 159 residues: MKIKVGFGFDVHQLVEGRELWLGGILLEHEKGLLGHSDADVLVHAICDALLGAANMRDIGYHFPDNAGEYKNIDSKILLKKTVELIAAKGYQIGNIDATICAERPKLKAHIPSMQQVLAEVMGIDADDISIKATTTEKLGFTGREEGISAYATVLINRV.

The a divalent metal cation site is built by Asp10 and His12. 4-CDP-2-C-methyl-D-erythritol 2-phosphate-binding positions include 10 to 12 (DVH) and 36 to 37 (HS). Position 44 (His44) interacts with a divalent metal cation. 4-CDP-2-C-methyl-D-erythritol 2-phosphate contacts are provided by residues 58 to 60 (DIG), 134 to 137 (TTTE), Phe141, and Arg144.

Belongs to the IspF family. As to quaternary structure, homotrimer. It depends on a divalent metal cation as a cofactor.

The enzyme catalyses 4-CDP-2-C-methyl-D-erythritol 2-phosphate = 2-C-methyl-D-erythritol 2,4-cyclic diphosphate + CMP. The protein operates within isoprenoid biosynthesis; isopentenyl diphosphate biosynthesis via DXP pathway; isopentenyl diphosphate from 1-deoxy-D-xylulose 5-phosphate: step 4/6. Its function is as follows. Involved in the biosynthesis of isopentenyl diphosphate (IPP) and dimethylallyl diphosphate (DMAPP), two major building blocks of isoprenoid compounds. Catalyzes the conversion of 4-diphosphocytidyl-2-C-methyl-D-erythritol 2-phosphate (CDP-ME2P) to 2-C-methyl-D-erythritol 2,4-cyclodiphosphate (ME-CPP) with a corresponding release of cytidine 5-monophosphate (CMP). The protein is 2-C-methyl-D-erythritol 2,4-cyclodiphosphate synthase of Bacteroides fragilis (strain YCH46).